Reading from the N-terminus, the 284-residue chain is MPGQRLRKPEWLKLRMRTGPEFGDIQRLLSETSLNTVCRSAMCPNLQECWSRGTATFLLLGNVCTRSCRFCAIGTQQKPIPPDPKEPARIAGAVTAMKLNFVVLTSVNRDDLPDGGARHWTETMKAIRLSSPDAGLECLIPDFEGNDEALDMVMNERPDVLNHNIETVPRLYTNVRPEASYNQSLSILDRALTLHGLATKSGMMVGMGETFEEVVASMKDLREAGCSRLTIGQYLQPTASHFPVERYVPPEEFDAYRDEALGMGFSTVQSGPFVRSSYLAGSEE.

[4Fe-4S] cluster is bound by residues Cys38, Cys43, Cys49, Cys64, Cys68, Cys71, and Ser277. One can recognise a Radical SAM core domain in the interval 50–266; the sequence is WSRGTATFLL…RDEALGMGFS (217 aa).

This sequence belongs to the radical SAM superfamily. Lipoyl synthase family. It depends on [4Fe-4S] cluster as a cofactor.

It localises to the cytoplasm. It catalyses the reaction [[Fe-S] cluster scaffold protein carrying a second [4Fe-4S](2+) cluster] + N(6)-octanoyl-L-lysyl-[protein] + 2 oxidized [2Fe-2S]-[ferredoxin] + 2 S-adenosyl-L-methionine + 4 H(+) = [[Fe-S] cluster scaffold protein] + N(6)-[(R)-dihydrolipoyl]-L-lysyl-[protein] + 4 Fe(3+) + 2 hydrogen sulfide + 2 5'-deoxyadenosine + 2 L-methionine + 2 reduced [2Fe-2S]-[ferredoxin]. Its pathway is protein modification; protein lipoylation via endogenous pathway; protein N(6)-(lipoyl)lysine from octanoyl-[acyl-carrier-protein]: step 2/2. Catalyzes the radical-mediated insertion of two sulfur atoms into the C-6 and C-8 positions of the octanoyl moiety bound to the lipoyl domains of lipoate-dependent enzymes, thereby converting the octanoylated domains into lipoylated derivatives. The protein is Lipoyl synthase of Chlorobium phaeovibrioides (strain DSM 265 / 1930) (Prosthecochloris vibrioformis (strain DSM 265)).